The sequence spans 1052 residues: MENLESRLKNAPYFRCEKGTDSIPLCRKCETCVLAWKIFSTKEWFCRINDISQRRFLVGILKQLNSLYLLHYFQNILQTTQGKDFIYNRSRINLSKKEGKVVKSSLNQMLDKTVEQKMKEILYWFANSTQWTKANYTLLLLQMCNPKLLLTAANVIRVLFLREENNISGLNQDITDVCFSPEKDHSSKSATSQVYWTAKTQHTSLPLSKAPENEHLLGAASNPEEPWRNSLRCISEMNRLFSGKGDITKPGYDPCNLLVDLDDIRDLSSGFSKYRDFIRYLPIHLSKYILRMLDRHTLNKCASVSQHWAAMAQQVKMDLSAHGFIQNQITFLQGSYTRGIDPNYANKVSIPVPKMVDDGKSMRVKHPKWKLRTKNEYNLWTAYQNEETQQVLIEERNVFCGTYNVRILSDTWDQNRVIHYSGGDLIAVSSNRKIHLLDIIQVKAIPVEFRGHAGSVRALFLCEEENFLLSGSYDLSIRYWDLKSGVCTRIFGGHQGTITCMDLCKNRLVSGGRDCQVKVWDVDTGKCLKTFRHKDPILATRINDTYIVSSCERGLVKVWHIAMAQLVKTLSGHEGAVKCLFFDQWHLLSGSTDGLVMAWSMVGKYERCLMAFKHPKEVLDVSLLFLRVISACADGKIRIYNFLNGNCMKVLKANGRGDPVLSFFIQGNRMVVNTESNVLMFQFEHIKWQYAVEKTKQKKNKEKEEEKEENSLMEILSKCNIQVHSPRESVSSKQTVIQELLPGKPPKSRVLLKPAKFSSAVLIEELQSQGKSKSPRRDADDVEKAQKQGQLETPGKLPSHPKKKSWKIPMSPDQFLLTVSALQHAHNSGEFAYPCRPQTEITDVWGPSISYPRKVLNFKGKSIQRAVDRLRLSNPPIDVKRTSIPLEIQKLQPNLKISLHSPRVQSTIPQPMIIRSRFSGSLKGGDQVTSSIERAVCSTGPLTSMQVIKPNRMLAPQVGTATLSLKKERPRIYTALDPFRVNTEFVLLTVKEEKEHQEAKMKEYQARESTGVVDPGKVSKAAWIRKIKGLPIDNFTKQGKTAAPELGQNVFI.

A WD 1 repeat occupies 169-206 (GLNQDITDVCFSPEKDHSSKSATSQVYWTAKTQHTSLP). The 48-residue stretch at 276 to 323 (DFIRYLPIHLSKYILRMLDRHTLNKCASVSQHWAAMAQQVKMDLSAHG) folds into the F-box domain. WD repeat units follow at residues 409–447 (SDTWDQNRVIHYSGGDLIAVSSNRKIHLLDIIQVKAIPV), 451–490 (GHAGSVRALFLCEEENFLLSGSYDLSIRYWDLKSGVCTRI), 493–532 (GHQGTITCMDLCKNRLVSGGRDCQVKVWDVDTGKCLKTFR), 534–569 (KDPILATRINDTYIVSSCERGLVKVWHIAMAQLVKT), 572–609 (GHEGAVKCLFFDQWHLLSGSTDGLVMAWSMVGKYERCL), and 611–652 (AFKH…KVLK). Residues 690–719 (YAVEKTKQKKNKEKEEEKEENSLMEILSKC) are a coiled coil. The tract at residues 766 to 805 (LQSQGKSKSPRRDADDVEKAQKQGQLETPGKLPSHPKKKS) is disordered. The span at 775-786 (PRRDADDVEKAQ) shows a compositional bias: basic and acidic residues. Positions 986-1010 (VLLTVKEEKEHQEAKMKEYQAREST) form a coiled coil.

Functionally, probable substrate-recognition component of a SCF (SKP1-CUL1-F-box protein)-type E3 ubiquitin ligase complex which mediates the ubiquitination and subsequent proteasomal degradation of target proteins. Overexpression is leading to degradation of CBX5 and CBX1. In Homo sapiens (Human), this protein is F-box/WD repeat-containing protein 10 (FBXW10).